We begin with the raw amino-acid sequence, 325 residues long: uncharacterized protein (325 aa).

Coiled coils occupy residues 38–69 (VHVANNLNNFVQQHKQLQNQMPQFQNQFQNQS) and 201–229 (ANTDRFNAELELKESDLEKINETLKLEFK).

This is an uncharacterized protein from Acanthamoeba polyphaga (Amoeba).